The primary structure comprises 159 residues: uncharacterized protein (159 aa).

An HTH asnC-type domain is found at 6–66; that stretch reads LSKKDWEIIK…YLRFDKLGYT (61 aa). The H-T-H motif DNA-binding region spans 25 to 44; it reads DAEIGRRIGLSKSAVRWRRI.

This is an uncharacterized protein from Pyrococcus horikoshii (strain ATCC 700860 / DSM 12428 / JCM 9974 / NBRC 100139 / OT-3).